The chain runs to 105 residues: Large ribosomal subunit protein bL21 (105 aa).

It belongs to the bacterial ribosomal protein bL21 family. In terms of assembly, part of the 50S ribosomal subunit. Contacts protein L20.

In terms of biological role, this protein binds to 23S rRNA in the presence of protein L20. The sequence is that of Large ribosomal subunit protein bL21 from Aliarcobacter butzleri (strain RM4018) (Arcobacter butzleri).